A 445-amino-acid polypeptide reads, in one-letter code: tRNA(Ile)-lysidine synthase (445 aa).

Residue 30 to 35 (SGGLDS) coordinates ATP.

This sequence belongs to the tRNA(Ile)-lysidine synthase family.

It is found in the cytoplasm. It catalyses the reaction cytidine(34) in tRNA(Ile2) + L-lysine + ATP = lysidine(34) in tRNA(Ile2) + AMP + diphosphate + H(+). Functionally, ligates lysine onto the cytidine present at position 34 of the AUA codon-specific tRNA(Ile) that contains the anticodon CAU, in an ATP-dependent manner. Cytidine is converted to lysidine, thus changing the amino acid specificity of the tRNA from methionine to isoleucine. The sequence is that of tRNA(Ile)-lysidine synthase from Alkalilimnicola ehrlichii (strain ATCC BAA-1101 / DSM 17681 / MLHE-1).